A 205-amino-acid polypeptide reads, in one-letter code: Peptidyl-tRNA hydrolase (205 aa).

Tyrosine 18 contacts tRNA. Histidine 23 (proton acceptor) is an active-site residue. TRNA is bound by residues tyrosine 69, asparagine 71, and asparagine 117.

This sequence belongs to the PTH family. In terms of assembly, monomer.

It is found in the cytoplasm. The enzyme catalyses an N-acyl-L-alpha-aminoacyl-tRNA + H2O = an N-acyl-L-amino acid + a tRNA + H(+). Functionally, hydrolyzes ribosome-free peptidyl-tRNAs (with 1 or more amino acids incorporated), which drop off the ribosome during protein synthesis, or as a result of ribosome stalling. In terms of biological role, catalyzes the release of premature peptidyl moieties from peptidyl-tRNA molecules trapped in stalled 50S ribosomal subunits, and thus maintains levels of free tRNAs and 50S ribosomes. The protein is Peptidyl-tRNA hydrolase of Synechococcus sp. (strain CC9605).